The chain runs to 229 residues: uncharacterized protein (229 aa).

The PilZ domain maps to Arg102–Glu217.

It to A.aeolicus aq_820 and aq_1211.

This is an uncharacterized protein from Aquifex aeolicus (strain VF5).